A 229-amino-acid polypeptide reads, in one-letter code: Heptaprenylglyceryl phosphate synthase (229 aa).

Mg(2+) is bound by residues Asp-13 and Thr-39.

This sequence belongs to the GGGP/HepGP synthase family. Homodimer. Mg(2+) is required as a cofactor.

The catalysed reaction is sn-glycerol 1-phosphate + all-trans-heptaprenyl diphosphate = 3-heptaprenyl-sn-glycero-1-phosphate + diphosphate. Its pathway is membrane lipid metabolism; glycerophospholipid metabolism. Functionally, prenyltransferase that catalyzes in vivo the transfer of the heptaprenyl moiety of heptaprenyl pyrophosphate (HepPP; 35 carbon atoms) to the C3 hydroxyl of sn-glycerol-1-phosphate (G1P), producing heptaprenylglyceryl phosphate (HepGP). This reaction is an ether-bond-formation step in the biosynthesis of archaea-type G1P-based membrane lipids found in Bacillales. The chain is Heptaprenylglyceryl phosphate synthase from Lysinibacillus sphaericus (strain C3-41).